A 287-amino-acid polypeptide reads, in one-letter code: Ribonuclease Z (287 aa).

The Zn(2+) site is built by histidine 64, histidine 66, aspartate 68, histidine 69, histidine 124, aspartate 191, and histidine 250. Residue aspartate 68 is the Proton acceptor of the active site.

It belongs to the RNase Z family. In terms of assembly, homodimer. The cofactor is Zn(2+).

It catalyses the reaction Endonucleolytic cleavage of RNA, removing extra 3' nucleotides from tRNA precursor, generating 3' termini of tRNAs. A 3'-hydroxy group is left at the tRNA terminus and a 5'-phosphoryl group is left at the trailer molecule.. In terms of biological role, zinc phosphodiesterase, which displays some tRNA 3'-processing endonuclease activity. Probably involved in tRNA maturation, by removing a 3'-trailer from precursor tRNA. The polypeptide is Ribonuclease Z (Pyrobaculum calidifontis (strain DSM 21063 / JCM 11548 / VA1)).